The chain runs to 592 residues: Inactive metallocarboxypeptidase ECM14 (592 aa).

Residues 1–21 form the signal peptide; sequence MRQFTHGTLLAILALANTISA. Positions 22–174 are excised as a propeptide; the sequence is IPSFSANNYP…QTVYESYPSS (153 aa). The segment covering 170–179 has biased composition (polar residues); it reads SYPSSSQRPT. Residues 170–191 are disordered; that stretch reads SYPSSSQRPTDNGRGFLPSRES. The region spanning 202–521 is the Peptidase M14 domain; the sequence is DYQPLSVIGP…NAVMVLAKFL (320 aa). Zn(2+) is bound by residues His-264 and Glu-267. Residues 264 to 267, Arg-322, and 339 to 340 each bind substrate; these read HARE and DR. Cys-333 and Cys-356 are joined by a disulfide. Asn-349 carries N-linked (GlcNAc...) asparagine glycosylation. His-396 contributes to the Zn(2+) binding site. Substrate is bound at residue 397–398; that stretch reads SY. A disordered region spans residues 542-592; sequence ADKPILDDGDDDEEEDGQDKKDDSWIPDEYKNDNDHDDDDDGWGLRRRRKR. The segment covering 548 to 558 has biased composition (acidic residues); it reads DDGDDDEEEDG. Positions 559–575 are enriched in basic and acidic residues; the sequence is QDKKDDSWIPDEYKNDN.

It belongs to the peptidase M14 family. Requires Zn(2+) as cofactor.

The protein resides in the vacuole. It is found in the secreted. In terms of biological role, inactive carboxypeptidase that may play a role in cell wall organization and biogenesis. This chain is Inactive metallocarboxypeptidase ECM14 (ECM14), found in Ajellomyces dermatitidis (strain ER-3 / ATCC MYA-2586) (Blastomyces dermatitidis).